We begin with the raw amino-acid sequence, 54 residues long: Ovomucoid (54 aa).

One can recognise a Kazal-like domain in the interval 4-54 (VDCSDYPKPVCTLDYMPLCGSDNKTYSNKCNFCNAVVDSNGTITLSHFGRC). 3 disulfides stabilise this stretch: cysteine 6-cysteine 36, cysteine 14-cysteine 33, and cysteine 22-cysteine 54. A glycan (N-linked (GlcNAc...) asparagine) is linked at asparagine 43.

It is found in the secreted. The chain is Ovomucoid from Coloeus monedula (Eurasian jackdaw).